The chain runs to 339 residues: Homocysteine S-methyltransferase 2 (339 aa).

The Hcy-binding domain maps to 12–326 (AVRRWVDAAG…NTIRAIHRTL (315 aa)). Zn(2+) contacts are provided by C244, C311, and C312.

In terms of assembly, monomer. Requires Zn(2+) as cofactor.

The enzyme catalyses S-methyl-L-methionine + L-homocysteine = 2 L-methionine + H(+). Its function is as follows. Catalyzes methyl transfer from S-methylmethionine (SMM) to adenosyl-L-homocysteine (AdoMet). SMM degradation (by HMT-1, HMT-2, HMT-3 and HMT-4) and biosynthesis (by MMT1) constitute the SMM cycle in plants, which is probably required to achieve short term control of AdoMet level. This is Homocysteine S-methyltransferase 2 (HMT-2) from Zea mays (Maize).